Consider the following 159-residue polypeptide: Cyclic pyranopterin monophosphate synthase (159 aa).

Substrate contacts are provided by residues 76–78 (MCH) and 114–115 (ME). Asp129 is a catalytic residue.

It belongs to the MoaC family. In terms of assembly, homohexamer; trimer of dimers.

It catalyses the reaction (8S)-3',8-cyclo-7,8-dihydroguanosine 5'-triphosphate = cyclic pyranopterin phosphate + diphosphate. It functions in the pathway cofactor biosynthesis; molybdopterin biosynthesis. In terms of biological role, catalyzes the conversion of (8S)-3',8-cyclo-7,8-dihydroguanosine 5'-triphosphate to cyclic pyranopterin monophosphate (cPMP). This is Cyclic pyranopterin monophosphate synthase from Natranaerobius thermophilus (strain ATCC BAA-1301 / DSM 18059 / JW/NM-WN-LF).